Reading from the N-terminus, the 185-residue chain is Ribosome-recycling factor (185 aa).

This sequence belongs to the RRF family.

The protein resides in the cytoplasm. Functionally, responsible for the release of ribosomes from messenger RNA at the termination of protein biosynthesis. May increase the efficiency of translation by recycling ribosomes from one round of translation to another. The sequence is that of Ribosome-recycling factor from Enterococcus faecalis (strain ATCC 700802 / V583).